Reading from the N-terminus, the 191-residue chain is Fe/S biogenesis protein NfuA (191 aa).

Residues Cys-149 and Cys-152 each coordinate [4Fe-4S] cluster.

It belongs to the NfuA family. As to quaternary structure, homodimer. [4Fe-4S] cluster serves as cofactor.

Involved in iron-sulfur cluster biogenesis. Binds a 4Fe-4S cluster, can transfer this cluster to apoproteins, and thereby intervenes in the maturation of Fe/S proteins. Could also act as a scaffold/chaperone for damaged Fe/S proteins. In Sodalis glossinidius (strain morsitans), this protein is Fe/S biogenesis protein NfuA.